The primary structure comprises 121 residues: Small ribosomal subunit protein uS13 (121 aa).

Residues R92 to K121 are disordered.

The protein belongs to the universal ribosomal protein uS13 family. As to quaternary structure, part of the 30S ribosomal subunit. Forms a loose heterodimer with protein S19. Forms two bridges to the 50S subunit in the 70S ribosome.

Its function is as follows. Located at the top of the head of the 30S subunit, it contacts several helices of the 16S rRNA. In the 70S ribosome it contacts the 23S rRNA (bridge B1a) and protein L5 of the 50S subunit (bridge B1b), connecting the 2 subunits; these bridges are implicated in subunit movement. Contacts the tRNAs in the A and P-sites. This is Small ribosomal subunit protein uS13 from Polynucleobacter asymbioticus (strain DSM 18221 / CIP 109841 / QLW-P1DMWA-1) (Polynucleobacter necessarius subsp. asymbioticus).